The chain runs to 368 residues: Interferon-stimulated 20 kDa exonuclease-like 2 (368 aa).

Disordered regions lie at residues 33–107 and 127–187; these read FLEQ…APSK and PKTK…PTVP. Polar residues predominate over residues 42-54; sequence KKNQPPNKVSKLN. Over residues 77 to 96 the composition is skewed to basic and acidic residues; the sequence is KKKEAAASKRDSERSKDKKA. Over residues 131-145 the composition is skewed to basic residues; that stretch reads STQKKGSKKKSLKKK. Residues 194-368 form the Exonuclease domain; the sequence is MVAIDCEMVG…QHLAQNPPEN (175 aa).

It localises to the nucleus. The protein resides in the nucleolus. 3'-&gt; 5'-exoribonuclease involved in ribosome biogenesis in the processing of the 12S pre-rRNA. Displays a strong specificity for a 3'-end containing a free hydroxyl group. This chain is Interferon-stimulated 20 kDa exonuclease-like 2 (Isg20l2), found in Mus musculus (Mouse).